The following is a 468-amino-acid chain: Nuclear receptor ROR-alpha A (468 aa).

A DNA-binding region (nuclear receptor) is located at residues 15–90 (IIPCKICGDK…VGMSRDAVKF (76 aa)). 2 NR C4-type zinc fingers span residues 18–38 (CKIC…CEGC) and 54–73 (CPRQ…CQHC). Disordered regions lie at residues 101–129 (LYAE…PLTP) and 142–163 (HDDL…DSGV). The NR LBD domain occupies 217–455 (ELEHLAQNIS…AHFPPLYKEL (239 aa)). The AF-2 stretch occupies residues 444-455 (VRAHFPPLYKEL).

The protein belongs to the nuclear hormone receptor family. NR1 subfamily. Expressed in the brain, in cerebellar-like structures, including Purkinje cells.

It is found in the nucleus. Its function is as follows. Nuclear receptor that binds DNA as a monomer to ROR response elements (RORE). Required for proper cerebellum development. This is Nuclear receptor ROR-alpha A (roraa) from Danio rerio (Zebrafish).